The following is a 364-amino-acid chain: Aminomethyltransferase (364 aa).

It belongs to the GcvT family. The glycine cleavage system is composed of four proteins: P, T, L and H.

The catalysed reaction is N(6)-[(R)-S(8)-aminomethyldihydrolipoyl]-L-lysyl-[protein] + (6S)-5,6,7,8-tetrahydrofolate = N(6)-[(R)-dihydrolipoyl]-L-lysyl-[protein] + (6R)-5,10-methylene-5,6,7,8-tetrahydrofolate + NH4(+). Its function is as follows. The glycine cleavage system catalyzes the degradation of glycine. The protein is Aminomethyltransferase of Shigella boydii serotype 18 (strain CDC 3083-94 / BS512).